The chain runs to 376 residues: Rhodopsin (376 aa).

At 1–51 (MSLINEPSYSAYSWGGQGGYGNQTVVDKVLPEMLHLIDPHWYQFPPMNPLW) the chain is on the extracellular side. N-linked (GlcNAc...) asparagine glycosylation occurs at Asn22. The helical transmembrane segment at 52-76 (HGLLGFVIGCLGFVSVVGNGMVIYI) threads the bilayer. The Cytoplasmic segment spans residues 77–88 (FSTTKGLRTPSN). Residues 89–113 (LLVVNLAFSDFLMMLSMSPPMVINC) traverse the membrane as a helical segment. At 114-128 (YYETWVLGPFMCELY) the chain is on the extracellular side. A disulfide bond links Cys125 and Cys202. Residues 129–148 (ALLGSLFGCGSIWTMVMIAL) traverse the membrane as a helical segment. Over 149 to 167 (DRYNVIVKGLAAKPMTNKT) the chain is Cytoplasmic. Residues 168–191 (AMLRILGIWAMSIAWTVFPLFGWN) traverse the membrane as a helical segment. Residues 192-215 (RYVPEGNMTACGTDYLNKEWVSRS) are Extracellular-facing. Asn198 carries N-linked (GlcNAc...) asparagine glycosylation. A helical membrane pass occupies residues 216–243 (YILVYSVFVYFLPLATIIYSYWFIVQAV). At 244 to 278 (SAHEKQMREQAKKMNVASLRSAENANTSAECKLAK) the chain is on the cytoplasmic side. The chain crosses the membrane as a helical span at residues 279–302 (VALMTISLWFFAWTPYLVTDFSGI). Topologically, residues 303–309 (FEWGKIS) are extracellular. A helical transmembrane segment spans residues 310–334 (PLATIWCSLFAKANAVYNPIVYGIS). Lys321 carries the N6-(retinylidene)lysine modification. Residues 335 to 376 (HPKYRAALNKKFPSLACASEPDDTASQASGATTVSDEKSASA) lie on the Cytoplasmic side of the membrane. Positions 353–376 (SEPDDTASQASGATTVSDEKSASA) are disordered. Positions 358 to 368 (TASQASGATTV) are enriched in polar residues.

The protein belongs to the G-protein coupled receptor 1 family. Opsin subfamily. Post-translationally, phosphorylated on some or all of the serine and threonine residues present in the C-terminal region.

It is found in the membrane. Functionally, visual pigments are the light-absorbing molecules that mediate vision. They consist of an apoprotein, opsin, covalently linked to cis-retinal. The chain is Rhodopsin from Sphodromantis sp. (Mantis).